We begin with the raw amino-acid sequence, 604 residues long: Glutamine--fructose-6-phosphate aminotransferase [isomerizing] (604 aa).

Catalysis depends on cysteine 2, which acts as the Nucleophile; for GATase activity. The Glutamine amidotransferase type-2 domain maps to 2–216 (CGIVGYVGFR…DGDVVRLTRE (215 aa)). SIS domains lie at 281–420 (LALD…ARGA) and 453–594 (VAEK…VDQP). The For Fru-6P isomerization activity role is filled by lysine 599.

Homodimer.

Its subcellular location is the cytoplasm. The enzyme catalyses D-fructose 6-phosphate + L-glutamine = D-glucosamine 6-phosphate + L-glutamate. Catalyzes the first step in hexosamine metabolism, converting fructose-6P into glucosamine-6P using glutamine as a nitrogen source. The polypeptide is Glutamine--fructose-6-phosphate aminotransferase [isomerizing] (Thermus thermophilus (strain ATCC BAA-163 / DSM 7039 / HB27)).